The sequence spans 57 residues: UPF0391 membrane protein BRADO2787 (57 aa).

The next 2 membrane-spanning stretches (helical) occupy residues 6–26 and 35–55; these read WALL…TGVS and ILFY…LTIF.

Belongs to the UPF0391 family.

Its subcellular location is the cell membrane. In Bradyrhizobium sp. (strain ORS 278), this protein is UPF0391 membrane protein BRADO2787.